The chain runs to 349 residues: Anthranilate phosphoribosyltransferase (349 aa).

Residues G82, 85-86 (GD), 92-95 (NVST), 110-118 (KHGNRAVSG), and S122 each bind 5-phospho-alpha-D-ribose 1-diphosphate. G82 contacts anthranilate. Residue S94 participates in Mg(2+) binding. N113 serves as a coordination point for anthranilate. R168 is a binding site for anthranilate. The Mg(2+) site is built by D227 and E228.

Belongs to the anthranilate phosphoribosyltransferase family. In terms of assembly, homodimer. Requires Mg(2+) as cofactor.

The catalysed reaction is N-(5-phospho-beta-D-ribosyl)anthranilate + diphosphate = 5-phospho-alpha-D-ribose 1-diphosphate + anthranilate. It functions in the pathway amino-acid biosynthesis; L-tryptophan biosynthesis; L-tryptophan from chorismate: step 2/5. Catalyzes the transfer of the phosphoribosyl group of 5-phosphorylribose-1-pyrophosphate (PRPP) to anthranilate to yield N-(5'-phosphoribosyl)-anthranilate (PRA). The polypeptide is Anthranilate phosphoribosyltransferase (Pseudomonas putida (strain ATCC 700007 / DSM 6899 / JCM 31910 / BCRC 17059 / LMG 24140 / F1)).